A 304-amino-acid chain; its full sequence is Voltage-dependent anion channel-forming protein YneE (304 aa).

Transmembrane regions (helical) follow at residues L28–L48, I50–F70, V194–L214, and L220–I240.

The protein belongs to the anion channel-forming bestrophin (TC 1.A.46) family.

Its subcellular location is the cell membrane. The protein is Voltage-dependent anion channel-forming protein YneE (yneE) of Escherichia coli (strain K12).